Consider the following 517-residue polypeptide: Arp2/3 complex-activating protein rickA (517 aa).

Disordered stretches follow at residues 313–441 and 461–517; these read LENN…SKPA and KVSD…SFVR. 2 stretches are compositionally biased toward pro residues: residues 319–340 and 347–378; these read PPSPLPENNIPSPPPPPPPSPL and SSPPPPPPPPLPENNIPSPPPPPPPPPPPPMA. A WH2 domain is found at 406–423; it reads DTSDLMREIAGPKKLKKV. The central and acidic domains stretch occupies residues 444–477; that stretch reads VNALSGLESIFARRAVIKVSDSSSSESDSGNWSD. Residues 463–479 are compositionally biased toward low complexity; the sequence is SDSSSSESDSGNWSDVS. Polar residues predominate over residues 500–517; sequence THAQKINNRNSQNPSFVR.

Homodimer.

The protein localises to the cell surface. Recruits and activates the Arp2/3 complex, which in turn leads to actin polymerization, promoting Rickettsia motility during infection. This Rickettsia conorii (strain ATCC VR-613 / Malish 7) protein is Arp2/3 complex-activating protein rickA (rickA).